The primary structure comprises 434 residues: Tryptophan synthase beta chain 2 (434 aa).

An N6-(pyridoxal phosphate)lysine modification is found at Lys-110.

It belongs to the TrpB family. In terms of assembly, tetramer of two alpha and two beta chains. Pyridoxal 5'-phosphate is required as a cofactor.

The catalysed reaction is (1S,2R)-1-C-(indol-3-yl)glycerol 3-phosphate + L-serine = D-glyceraldehyde 3-phosphate + L-tryptophan + H2O. Its pathway is amino-acid biosynthesis; L-tryptophan biosynthesis; L-tryptophan from chorismate: step 5/5. Its function is as follows. The beta subunit is responsible for the synthesis of L-tryptophan from indole and L-serine. In Aquifex aeolicus (strain VF5), this protein is Tryptophan synthase beta chain 2 (trpB2).